We begin with the raw amino-acid sequence, 190 residues long: Imidazoleglycerol-phosphate dehydratase (190 aa).

The protein belongs to the imidazoleglycerol-phosphate dehydratase family.

It localises to the cytoplasm. It catalyses the reaction D-erythro-1-(imidazol-4-yl)glycerol 3-phosphate = 3-(imidazol-4-yl)-2-oxopropyl phosphate + H2O. Its pathway is amino-acid biosynthesis; L-histidine biosynthesis; L-histidine from 5-phospho-alpha-D-ribose 1-diphosphate: step 6/9. In Nitratiruptor sp. (strain SB155-2), this protein is Imidazoleglycerol-phosphate dehydratase.